The chain runs to 31 residues: Conotoxin Cltx-2 (31 aa).

2 positions are modified to 4-hydroxyproline: P6 and P31.

In terms of processing, contains 4 disulfide bonds. Expressed by the venom duct.

Its subcellular location is the secreted. The chain is Conotoxin Cltx-2 from Californiconus californicus (California cone).